We begin with the raw amino-acid sequence, 179 residues long: Laminin-binding fimbrial subunit ElfA (179 aa).

The signal sequence occupies residues 1–21; sequence MKKSVLTAFITVVCATSSVMA.

The protein belongs to the fimbrial protein family.

The protein localises to the fimbrium. Functionally, part of the elfADCG fimbrial operon, which could be required for adherence to host epithelial cells. ElfA is an accessory colonization factor that contributes to adherence of bacteria to human intestinal epithelial cells and to animal intestinal tissue in vitro. Binds specifically to laminin, but not to fibronectin or collagen type IV. This is Laminin-binding fimbrial subunit ElfA (elfA) from Escherichia coli O157:H7.